A 387-amino-acid chain; its full sequence is MNLHEYQAKDLLESYGLKVQKGIVAHNPNEAARAFDQLGGKFAVVKAQVHAGGRGKAGGVKVVKSSQEAREVAESLIGKNLVTFQTDAEGQPVNSVGVFEDVYPVTRELYLGAVVDRSSRKVTFMASTEGGVDIEEVAHNSPEKILKVEVDPLVGLQPFQAREVAFKLGLEGKQINDFVKTMLGAYKAFIECDFALFEINPLAVRENGEIVCVDGKINLDSNALYRHPKLLALRDKSQENAKELKASEHELNYVALEGNIGCMVNGAGLAMATMDIIQLYGGKPANFLDVGGGATKERVIEAFKLILDDENVKAVLINIFGGIVRCDMIAEAIIEAVKEVNVTVPVVVRLEGNNAEKGAKILADSGLKLIPADGLADAADKVVKSLG.

The 237-residue stretch at 9–245 folds into the ATP-grasp domain; the sequence is KDLLESYGLK…KSQENAKELK (237 aa). ATP-binding positions include lysine 46, 53-55, glutamate 100, tyrosine 103, and glutamate 108; that span reads GRG. 2 residues coordinate Mg(2+): asparagine 200 and aspartate 214. Substrate-binding positions include asparagine 265 and 322–324; that span reads GIV.

It belongs to the succinate/malate CoA ligase beta subunit family. As to quaternary structure, heterotetramer of two alpha and two beta subunits. Mg(2+) is required as a cofactor.

The catalysed reaction is succinate + ATP + CoA = succinyl-CoA + ADP + phosphate. It catalyses the reaction GTP + succinate + CoA = succinyl-CoA + GDP + phosphate. Its pathway is carbohydrate metabolism; tricarboxylic acid cycle; succinate from succinyl-CoA (ligase route): step 1/1. Succinyl-CoA synthetase functions in the citric acid cycle (TCA), coupling the hydrolysis of succinyl-CoA to the synthesis of either ATP or GTP and thus represents the only step of substrate-level phosphorylation in the TCA. The beta subunit provides nucleotide specificity of the enzyme and binds the substrate succinate, while the binding sites for coenzyme A and phosphate are found in the alpha subunit. The polypeptide is Succinate--CoA ligase [ADP-forming] subunit beta (Francisella tularensis subsp. mediasiatica (strain FSC147)).